The chain runs to 91 residues: Small ribosomal subunit protein uS19 (91 aa).

The protein belongs to the universal ribosomal protein uS19 family.

Protein S19 forms a complex with S13 that binds strongly to the 16S ribosomal RNA. This Metamycoplasma arthritidis (strain 158L3-1) (Mycoplasma arthritidis) protein is Small ribosomal subunit protein uS19.